The following is a 93-amino-acid chain: Aspartyl/glutamyl-tRNA(Asn/Gln) amidotransferase subunit C (93 aa).

Belongs to the GatC family. As to quaternary structure, heterotrimer of A, B and C subunits.

The catalysed reaction is L-glutamyl-tRNA(Gln) + L-glutamine + ATP + H2O = L-glutaminyl-tRNA(Gln) + L-glutamate + ADP + phosphate + H(+). The enzyme catalyses L-aspartyl-tRNA(Asn) + L-glutamine + ATP + H2O = L-asparaginyl-tRNA(Asn) + L-glutamate + ADP + phosphate + 2 H(+). Its function is as follows. Allows the formation of correctly charged Asn-tRNA(Asn) or Gln-tRNA(Gln) through the transamidation of misacylated Asp-tRNA(Asn) or Glu-tRNA(Gln) in organisms which lack either or both of asparaginyl-tRNA or glutaminyl-tRNA synthetases. The reaction takes place in the presence of glutamine and ATP through an activated phospho-Asp-tRNA(Asn) or phospho-Glu-tRNA(Gln). This chain is Aspartyl/glutamyl-tRNA(Asn/Gln) amidotransferase subunit C, found in Methanococcoides burtonii (strain DSM 6242 / NBRC 107633 / OCM 468 / ACE-M).